Reading from the N-terminus, the 621-residue chain is Putative acyltransferase plsB1 (621 aa).

Residues 123–128 (HRSYLD) carry the HXXXXD motif motif.

This sequence belongs to the GPAT/DAPAT family.

The protein localises to the cell membrane. The protein is Putative acyltransferase plsB1 (plsB1) of Mycobacterium bovis (strain ATCC BAA-935 / AF2122/97).